The primary structure comprises 361 residues: Chorismate synthase (361 aa).

Arg-48 and Arg-54 together coordinate NADP(+). FMN contacts are provided by residues 125–127 (RSS), 238–239 (NA), Gly-278, 293–297 (KPTSS), and Arg-319.

This sequence belongs to the chorismate synthase family. Homotetramer. Requires FMNH2 as cofactor.

It carries out the reaction 5-O-(1-carboxyvinyl)-3-phosphoshikimate = chorismate + phosphate. It participates in metabolic intermediate biosynthesis; chorismate biosynthesis; chorismate from D-erythrose 4-phosphate and phosphoenolpyruvate: step 7/7. Its function is as follows. Catalyzes the anti-1,4-elimination of the C-3 phosphate and the C-6 proR hydrogen from 5-enolpyruvylshikimate-3-phosphate (EPSP) to yield chorismate, which is the branch point compound that serves as the starting substrate for the three terminal pathways of aromatic amino acid biosynthesis. This reaction introduces a second double bond into the aromatic ring system. This Salmonella paratyphi A (strain ATCC 9150 / SARB42) protein is Chorismate synthase.